A 385-amino-acid chain; its full sequence is S-adenosylmethionine synthase (385 aa).

H16 is an ATP binding site. Position 18 (D18) interacts with Mg(2+). A K(+)-binding site is contributed by E44. Residues E57 and Q100 each contribute to the L-methionine site. The interval 100–110 (QSPDINQGVDK) is flexible loop. ATP contacts are provided by residues 165 to 167 (DAK), 231 to 232 (RF), D240, 246 to 247 (RK), A263, and K267. Position 240 (D240) interacts with L-methionine. Position 271 (K271) interacts with L-methionine.

The protein belongs to the AdoMet synthase family. Homotetramer; dimer of dimers. Mg(2+) is required as a cofactor. K(+) serves as cofactor.

The protein localises to the cytoplasm. The enzyme catalyses L-methionine + ATP + H2O = S-adenosyl-L-methionine + phosphate + diphosphate. Its pathway is amino-acid biosynthesis; S-adenosyl-L-methionine biosynthesis; S-adenosyl-L-methionine from L-methionine: step 1/1. In terms of biological role, catalyzes the formation of S-adenosylmethionine (AdoMet) from methionine and ATP. The overall synthetic reaction is composed of two sequential steps, AdoMet formation and the subsequent tripolyphosphate hydrolysis which occurs prior to release of AdoMet from the enzyme. This chain is S-adenosylmethionine synthase, found in Vibrio cholerae serotype O1 (strain ATCC 39315 / El Tor Inaba N16961).